We begin with the raw amino-acid sequence, 441 residues long: MPRARKGNTPRKGGQRRGGGARSSAQADSGSSEDEAASEARSTTSECPSLLSTTAEDSLGGDTVDEQGPQEDLEEKLKEYVDGLTDKSAKTRQGALESLRLALASRLLPDFLLERRFTLADALEKCLKKGKGEEQALAAAVLGLLCVQLGPGPKGEELFHSLQPLLLSVLSDSTASPAARLHCASALGLGCYVAAADVQDLVSCLACLEGVFSRSCGTGSSTSHVAPASLHGVCCAALQAWALLLTICPSAHISHILDRQLPRLPQLLSSESVNLRIAAGETIALLFELARDLEEDFVYEDMEALCSTLRTLATDSNKYRAKADRRRQRSTFRAVLHYVEGGECEEETVRFGLEVLYVDSWARHRVYTSFKEALGSGLHHHLQNNELLRDIFGLGPVLVLDATALKACKISRFEKHLYNAAAFKARTKARSRVRDKRADIL.

Over residues 1–15 (MPRARKGNTPRKGGQ) the composition is skewed to basic residues. The tract at residues 1–72 (MPRARKGNTP…TVDEQGPQED (72 aa)) is disordered. Positions 63 to 72 (TVDEQGPQED) are enriched in acidic residues.

This sequence belongs to the IFRD family. As to quaternary structure, associates with ribosomes; promoting ribosome inactivation.

In terms of biological role, ribosome-binding protein that acts as an inhibitor of mRNA translation by promoting ribosome inactivation. Associates with the P- and E-sites of the ribosome and inserts a C-terminal helix into the mRNA exit channel to preclude translation. The sequence is that of Interferon-related developmental regulator 2 from Oryctolagus cuniculus (Rabbit).